A 343-amino-acid polypeptide reads, in one-letter code: MGRRARSARSFGVSPLWGGVSVRSGDRGEAAVGGLWEVPDFWGLFPSRISPLAGEVESGTRVWLDGWRLVEEAGPGERLKASKVGRLVALAYPDAPADLLRWAADLFAWLTAFDDVHVEAPGVTTAELGPHMASFVGVLETGTAPGAAPTPFPAALAELLDRARELLTPLQEERVRARLGKVFVAMLWEITTRERTVSTAEYETMRPHTFFSAVGAALVEPCAGLDLSHGVRADPGVRRLTQALATLWERTNDLYSFAYEQRALGSVPRTLPWLIAQERGLPLDAAFAEAGRWCEEEAVLAHRLIGELSASAREGVPEYAGAVAHAIGGTRRLYEVSDRWREE.

The Mg(2+) site is built by Asp114 and Glu119. The DDXXXE motif motif lies at 114 to 119; sequence DDVHVE. Arg206 provides a ligand contact to substrate. Mg(2+)-binding residues include Asn252, Ser256, and Glu260. The NXXXSXXXE motif motif lies at 252 to 260; the sequence is NDLYSFAYE.

Belongs to the terpene synthase family. Mg(2+) serves as cofactor.

The catalysed reaction is (13E)-labda-7,13-dien-15-yl diphosphate = labda-7,13(16),14-triene + diphosphate. Functionally, involved in the biosynthesis of the labdane-type bicyclic diterpene labda-7,13(16),14-triene. Catalyzes the conversion of labda-7,13(E)-dienyl diphosphate to yield labda-7,13(16),14-triene. The sequence is that of Labda-7,13(16),14-triene synthase from Streptomyces clavuligerus.